A 259-amino-acid polypeptide reads, in one-letter code: Small ribosomal subunit protein uS2 (259 aa).

The protein belongs to the universal ribosomal protein uS2 family.

This chain is Small ribosomal subunit protein uS2, found in Streptococcus pneumoniae (strain 70585).